The following is a 283-amino-acid chain: Formamidopyrimidine-DNA glycosylase (283 aa).

The Schiff-base intermediate with DNA role is filled by proline 2. The active-site Proton donor is glutamate 3. Lysine 58 (proton donor; for beta-elimination activity) is an active-site residue. DNA contacts are provided by histidine 100, arginine 119, and arginine 162. The segment at 247-283 (RVYGREGQPCVTPGCRGLVGRIVQSGRSSFHCPECQR) adopts an FPG-type zinc-finger fold. The active-site Proton donor; for delta-elimination activity is arginine 273.

Belongs to the FPG family. Monomer. Zn(2+) serves as cofactor.

The catalysed reaction is Hydrolysis of DNA containing ring-opened 7-methylguanine residues, releasing 2,6-diamino-4-hydroxy-5-(N-methyl)formamidopyrimidine.. It carries out the reaction 2'-deoxyribonucleotide-(2'-deoxyribose 5'-phosphate)-2'-deoxyribonucleotide-DNA = a 3'-end 2'-deoxyribonucleotide-(2,3-dehydro-2,3-deoxyribose 5'-phosphate)-DNA + a 5'-end 5'-phospho-2'-deoxyribonucleoside-DNA + H(+). Functionally, involved in base excision repair of DNA damaged by oxidation or by mutagenic agents. Acts as a DNA glycosylase that recognizes and removes damaged bases. Has a preference for oxidized purines, such as 7,8-dihydro-8-oxoguanine (8-oxoG). Has AP (apurinic/apyrimidinic) lyase activity and introduces nicks in the DNA strand. Cleaves the DNA backbone by beta-delta elimination to generate a single-strand break at the site of the removed base with both 3'- and 5'-phosphates. In Cereibacter sphaeroides (strain ATCC 17025 / ATH 2.4.3) (Rhodobacter sphaeroides), this protein is Formamidopyrimidine-DNA glycosylase.